A 102-amino-acid chain; its full sequence is ATP-dependent Clp protease adapter protein ClpS (102 aa).

Belongs to the ClpS family. Binds to the N-terminal domain of the chaperone ClpA.

Involved in the modulation of the specificity of the ClpAP-mediated ATP-dependent protein degradation. This is ATP-dependent Clp protease adapter protein ClpS from Wolinella succinogenes (strain ATCC 29543 / DSM 1740 / CCUG 13145 / JCM 31913 / LMG 7466 / NCTC 11488 / FDC 602W) (Vibrio succinogenes).